Here is a 73-residue protein sequence, read N- to C-terminus: Large ribosomal subunit protein bL31 (73 aa).

Cys16, Cys18, Cys37, and Cys40 together coordinate Zn(2+).

This sequence belongs to the bacterial ribosomal protein bL31 family. Type A subfamily. Part of the 50S ribosomal subunit. Requires Zn(2+) as cofactor.

Its function is as follows. Binds the 23S rRNA. The chain is Large ribosomal subunit protein bL31 from Pseudomonas fluorescens (strain ATCC BAA-477 / NRRL B-23932 / Pf-5).